A 290-amino-acid chain; its full sequence is Tegument protein VP22 (290 aa).

A compositionally biased stretch (polar residues) spans 98 to 112 (STSHGRLSPTKTTPH). A disordered region spans residues 98–156 (STSHGRLSPTKTTPHPKSAGVTPPQRVPARPATRAAAPSATPTQPDCVAKQRTSPGVNS). Residues 118–142 (VTPPQRVPARPATRAAAPSATPTQP) show a composition bias toward low complexity. The Nuclear localization signal motif lies at 146 to 149 (AKQR). The Nuclear export signal motif lies at 219-231 (LDRFLKAAAIRIL).

Belongs to the alphaherpesvirinae VP22 tegument protein family. In terms of assembly, interacts with gE (via C-terminus); this interaction is necessary for the recruitment of VP22 to the Golgi and its packaging into virions. Interacts with gM (via C-terminus). Interacts with VP16; this interaction allows the formation of a tripartite complex composed of VP16, VP22 and UL41/VHS. Interacts with the capsid-binding protein UL16. Interacts with host CGAS. Post-translationally, highly phosphorylated in the host cell. Packaging is selective for underphosphorylated forms.

Its subcellular location is the virion tegument. The protein resides in the host cytoplasm. It is found in the host nucleus. The protein localises to the host Golgi apparatus. Its function is as follows. Tegument protein that plays different roles during the time course of infection. Participates in both the accumulation of viral mRNAs and viral protein translation at late time of infection. Modulates the RNase activity of the virion host shutoff protein UL41 probably to ensure necessary levels of key cellular mRNAs and proteins. Plays a role in microtubule reorganization that occurs after viral infection by stabilizing microtubule network. Plays a role in the inhibition of host innate immune system by targeting the CGAS enzymatic activity which is the principal cytosolic DNA sensor that detects invading viral DNA. Acts by mediating disruption of liquid-like droplets in which CGAS is activated, thereby preventing CGAS activity. This is Tegument protein VP22 (11) from Equus caballus (Horse).